Here is a 185-residue protein sequence, read N- to C-terminus: Protein GrpE (185 aa).

Over residues M1–N12 the composition is skewed to basic and acidic residues. The segment at M1 to A22 is disordered.

It belongs to the GrpE family. Homodimer.

The protein localises to the cytoplasm. Participates actively in the response to hyperosmotic and heat shock by preventing the aggregation of stress-denatured proteins, in association with DnaK and GrpE. It is the nucleotide exchange factor for DnaK and may function as a thermosensor. Unfolded proteins bind initially to DnaJ; upon interaction with the DnaJ-bound protein, DnaK hydrolyzes its bound ATP, resulting in the formation of a stable complex. GrpE releases ADP from DnaK; ATP binding to DnaK triggers the release of the substrate protein, thus completing the reaction cycle. Several rounds of ATP-dependent interactions between DnaJ, DnaK and GrpE are required for fully efficient folding. This chain is Protein GrpE, found in Pseudomonas putida (strain ATCC 700007 / DSM 6899 / JCM 31910 / BCRC 17059 / LMG 24140 / F1).